The following is a 266-amino-acid chain: Mediator of RNA polymerase II transcription subunit 18 (266 aa).

It belongs to the Mediator complex subunit 18 family. As to quaternary structure, component of the Mediator complex.

The protein localises to the nucleus. Its function is as follows. Component of the Mediator complex, a coactivator involved in the regulated transcription of nearly all RNA polymerase II-dependent genes. Mediator functions as a bridge to convey information from gene-specific regulatory proteins to the basal RNA polymerase II transcription machinery. Mediator is recruited to promoters by direct interactions with regulatory proteins and serves as a scaffold for the assembly of a functional preinitiation complex with RNA polymerase II and the general transcription factors. The protein is Mediator of RNA polymerase II transcription subunit 18 (SRB5) of Candida glabrata (strain ATCC 2001 / BCRC 20586 / JCM 3761 / NBRC 0622 / NRRL Y-65 / CBS 138) (Yeast).